A 632-amino-acid polypeptide reads, in one-letter code: Putative ankyrin repeat protein L767 (632 aa).

5 ANK repeats span residues 61–97 (YGNTFMTNRIIKNTKYSLLDVNTVQMLLDYGDPDYEF), 228–250 (FDNEKLFYTVLYDSFELTKYIVE), 251–282 (KGFYYDFDSVINSDINLEMLKFFIELGNNLTD), 345–374 (NLDILMKTSILRENINMIKKCIEYGINVDD), and 517–546 (NSIELLFVVVLSENIDLFKLLLEINCNDTD).

The polypeptide is Putative ankyrin repeat protein L767 (Acanthamoeba polyphaga mimivirus (APMV)).